The primary structure comprises 236 residues: Probable transcriptional regulatory protein Suden_1389 (236 aa).

The protein belongs to the TACO1 family.

It localises to the cytoplasm. The sequence is that of Probable transcriptional regulatory protein Suden_1389 from Sulfurimonas denitrificans (strain ATCC 33889 / DSM 1251) (Thiomicrospira denitrificans (strain ATCC 33889 / DSM 1251)).